Here is a 550-residue protein sequence, read N- to C-terminus: Mitochondrial distribution and morphology protein 12 (550 aa).

In terms of domain architecture, SMP-LTD spans 1 to 550 (MSIDLNWETV…VYPSYWTFLV (550 aa)). Disordered stretches follow at residues 76–97 (SDLASESGSEEDEEEIADDRRR), 196–386 (GHGH…KLRE), and 466–489 (ENEVDGGEGDKQTGFKSPPGGGNG). Over residues 83–92 (GSEEDEEEIA) the composition is skewed to acidic residues. Pro residues predominate over residues 270–286 (PPFPPSSTGGPSPPPGL). Over residues 288–305 (KPHHPHHPHHHHAHHAHP) the composition is skewed to basic residues. The segment covering 327–344 (PTRDKTTPSHHPDPEDVH) has biased composition (basic and acidic residues). Polar residues predominate over residues 346 to 355 (PNTTTTNKQR). Over residues 356–371 (STSPATSSPLATSAQE) the composition is skewed to low complexity.

It belongs to the MDM12 family. As to quaternary structure, component of the ER-mitochondria encounter structure (ERMES) or MDM complex, composed of MMM1, MDM10, MDM12 and MDM34. An MMM1 homodimer associates with one molecule of MDM12 on each side in a pairwise head-to-tail manner, and the SMP-LTD domains of MMM1 and MDM12 generate a continuous hydrophobic tunnel for phospholipid trafficking.

The protein localises to the mitochondrion outer membrane. Its subcellular location is the endoplasmic reticulum membrane. In terms of biological role, component of the ERMES/MDM complex, which serves as a molecular tether to connect the endoplasmic reticulum (ER) and mitochondria. Components of this complex are involved in the control of mitochondrial shape and protein biogenesis, and function in nonvesicular lipid trafficking between the ER and mitochondria. MDM12 is required for the interaction of the ER-resident membrane protein MMM1 and the outer mitochondrial membrane-resident beta-barrel protein MDM10. The MDM12-MMM1 subcomplex functions in the major beta-barrel assembly pathway that is responsible for biogenesis of all mitochondrial outer membrane beta-barrel proteins, and acts in a late step after the SAM complex. The MDM10-MDM12-MMM1 subcomplex further acts in the TOM40-specific pathway after the action of the MDM12-MMM1 complex. Essential for establishing and maintaining the structure of mitochondria and maintenance of mtDNA nucleoids. The polypeptide is Mitochondrial distribution and morphology protein 12 (Podospora anserina (strain S / ATCC MYA-4624 / DSM 980 / FGSC 10383) (Pleurage anserina)).